The chain runs to 102 residues: Urease subunit beta (102 aa).

It belongs to the urease beta subunit family. In terms of assembly, heterotrimer of UreA (gamma), UreB (beta) and UreC (alpha) subunits. Three heterotrimers associate to form the active enzyme.

The protein resides in the cytoplasm. It carries out the reaction urea + 2 H2O + H(+) = hydrogencarbonate + 2 NH4(+). The protein operates within nitrogen metabolism; urea degradation; CO(2) and NH(3) from urea (urease route): step 1/1. The protein is Urease subunit beta of Methylibium petroleiphilum (strain ATCC BAA-1232 / LMG 22953 / PM1).